The sequence spans 221 residues: Small ribosomal subunit protein uS3 (221 aa).

The KH type-2 domain occupies 39-108; that stretch reads IRKFVKKRSY…NVIINIVEVK (70 aa).

This sequence belongs to the universal ribosomal protein uS3 family. As to quaternary structure, part of the 30S ribosomal subunit. Forms a tight complex with proteins S10 and S14.

Functionally, binds the lower part of the 30S subunit head. Binds mRNA in the 70S ribosome, positioning it for translation. In Clostridium novyi (strain NT), this protein is Small ribosomal subunit protein uS3.